Reading from the N-terminus, the 90-residue chain is Small ribosomal subunit protein bS16 (90 aa).

The protein belongs to the bacterial ribosomal protein bS16 family.

The sequence is that of Small ribosomal subunit protein bS16 from Brevibacillus brevis (strain 47 / JCM 6285 / NBRC 100599).